The chain runs to 106 residues: uncharacterized protein (106 aa).

3 consecutive transmembrane segments (helical) span residues 5-27 (IFVIGVFIVALALSAFHWVGIII), 42-64 (AVAAGLALSLFIFGAFLAYLAYM), and 76-98 (LPYISILLCMALAVISATITNFF).

It localises to the cell membrane. This is an uncharacterized protein from Archaeoglobus fulgidus (strain ATCC 49558 / DSM 4304 / JCM 9628 / NBRC 100126 / VC-16).